Here is a 512-residue protein sequence, read N- to C-terminus: MQFPPASGSTQMQVQKLPTGIEGFDDVCQGGLPIGRSTLISGTSGTGKTVFSLHFLHNGIKHFDEPGIFVTFEESPLDILRNAASFGWNLQEMVEQDKLFILDASPDPDGQDVAGSFDLSGLIERINYAIRKYKAKRVAIDSITAVFQQYDAVFVVRREIFRLIARLKEIGVTTVMTTERIDEYGPIARYGVEEFVSDNVVILRNVLEGERRRRTVEILKLRGTTHMKGEFPFTMGTHGISIFPLGAMRLTQRSSNVRVSSGVPRLDEMCGGGFFKDSIILATGATGTGKTLLVSKFIEDACRNKERAILFAYEESRAQLLRNGTSWGIDFEQMEQDGLLKIICAYPESTGLEDHLQIIKTDIGQFKPSRMAIDSLSALARGVSHNAFRQFVIGVTGYAKQEEIAGFFTNTSEEFMGSHSITDSHISTITDTILMLQYVEIRGEMARALNVFKMRGSWHDKGIREFVITGNGPQIKDSFSNFERIISGVPHRVTTDERSELSRIARGVSSED.

2 KaiC domains span residues 1-243 and 257-512; these read MQFP…ISIF and VRVS…SSED. Positions 45, 46, 47, 48, 49, 85, 220, 221, 222, 224, 226, 286, 287, 288, 289, 290, 291, and 292 each coordinate ATP. T49 contributes to the Mg(2+) binding site. T291 is a binding site for Mg(2+). E314 is a Mg(2+) binding site. W327 is an ATP binding site. Residue S427 is modified to Phosphoserine; by autocatalysis. A Phosphothreonine; by autocatalysis modification is found at T428. Residues R447, K453, M454, R455, S457, H459, and K461 each contribute to the ATP site.

Belongs to the KaiC family. As to quaternary structure, homohexamer; hexamerization is dependent on ATP-binding. The KaiABC complex composition changes during the circadian cycle to control KaiC phosphorylation. Complexes KaiC(6), KaiA(2-4):KaiC(6), KaiB(6):KaiC(6) and KaiC(6):KaiB(6):KaiA(12) are among the most important forms, many form cooperatively. KaiC interacts with SasA, activating its autokinase function and leading to RpaA activation. Mg(2+) serves as cofactor. Post-translationally, phosphorylated on serine and threonine residues by autocatalysis. Has a 4 step phosphorylation cycle; the autokinase acts first on Thr-428, then Ser-427. When Ser-427 is modified KaiC switches to an autophosphatase mode, acting first on phospho-Thr-428 then phospho-Ser-427.

The catalysed reaction is L-seryl-[protein] + ATP = O-phospho-L-seryl-[protein] + ADP + H(+). It carries out the reaction L-threonyl-[protein] + ATP = O-phospho-L-threonyl-[protein] + ADP + H(+). The enzyme catalyses ATP + H2O = ADP + phosphate + H(+). The interaction with KaiA enhances its phosphorylation status, while the interaction with KaiB decreases it. Its function is as follows. Central component of the KaiABC oscillator complex, which constitutes the main circadian regulator in cyanobacteria. Complex composition changes during the circadian cycle to control KaiC phosphorylation. KaiA stimulates KaiC autophosphorylation, while KaiB sequesters KaiA, leading to KaiC autodephosphorylation. Clock output pathways impact the RpaA transcriptional regulator. KaiC enhances the autophosphorylation activity of SasA, which then transfers its phosphate group to RpaA to activate it. KaiB and KaiC together enhance the phospho-RpaA dephosphatase activity of CikA. Functionally, has a weak, temperature-independent ATPase activity; ATPase activity defines the circadian period. The phosphorylation state of KaiC modulates its ATPase activity and effects KaiB binding. This chain is Circadian clock oscillator protein KaiC, found in Parasynechococcus marenigrum (strain WH8102).